The following is a 355-amino-acid chain: Protein-tyrosine sulfotransferase 1 (355 aa).

Topologically, residues 1–8 are cytoplasmic; it reads MIGKLKQN. The chain crosses the membrane as a helical; Signal-anchor for type II membrane protein span at residues 9–25; that stretch reads LLVACLVISSVTVFYLC. The Lumenal portion of the chain corresponds to 26–355; it reads RHAMDCHHRI…QKSPEKPNPS (330 aa). An N-linked (GlcNAc...) asparagine glycan is attached at Asn55. A 3'-phosphoadenylyl sulfate-binding site is contributed by 76 to 80; it reads RSGTT. A disulfide bridge connects residues Cys94 and Cys154. Catalysis depends on Glu97, which acts as the Proton donor/acceptor. Residues 99 to 103 are interaction with peptide substrate; the sequence is RVIPR. Residues Arg181, Ser189, and Arg193 each contribute to the 3'-phosphoadenylyl sulfate site. An intrachain disulfide couples Cys223 to Cys230. 3'-phosphoadenylyl sulfate is bound by residues Tyr235, 282-291, and Lys297; that span reads STDQVIKPVN. Positions 325–355 are disordered; sequence HANPPNYGRPDPLVLDNTRRLQKSPEKPNPS. Residues 341-355 show a composition bias toward basic and acidic residues; it reads NTRRLQKSPEKPNPS.

Belongs to the protein sulfotransferase family.

The protein localises to the golgi apparatus membrane. The catalysed reaction is L-tyrosyl-[protein] + 3'-phosphoadenylyl sulfate = O-sulfo-L-tyrosine-[protein] + adenosine 3',5'-bisphosphate + H(+). Its function is as follows. Catalyzes the O-sulfation of tyrosine residues within acidic motifs of polypeptides, using 3'-phosphoadenylyl sulfate (PAPS) as cosubstrate. The protein is Protein-tyrosine sulfotransferase 1 (tpst1) of Danio rerio (Zebrafish).